The primary structure comprises 232 residues: Enolase-phosphatase E1 (232 aa).

It belongs to the HAD-like hydrolase superfamily. MasA/MtnC family. In terms of assembly, monomer. Requires Mg(2+) as cofactor.

The catalysed reaction is 5-methylsulfanyl-2,3-dioxopentyl phosphate + H2O = 1,2-dihydroxy-5-(methylsulfanyl)pent-1-en-3-one + phosphate. It functions in the pathway amino-acid biosynthesis; L-methionine biosynthesis via salvage pathway; L-methionine from S-methyl-5-thio-alpha-D-ribose 1-phosphate: step 3/6. It participates in amino-acid biosynthesis; L-methionine biosynthesis via salvage pathway; L-methionine from S-methyl-5-thio-alpha-D-ribose 1-phosphate: step 4/6. Functionally, bifunctional enzyme that catalyzes the enolization of 2,3-diketo-5-methylthiopentyl-1-phosphate (DK-MTP-1-P) into the intermediate 2-hydroxy-3-keto-5-methylthiopentenyl-1-phosphate (HK-MTPenyl-1-P), which is then dephosphorylated to form the acireductone 1,2-dihydroxy-3-keto-5-methylthiopentene (DHK-MTPene). This chain is Enolase-phosphatase E1, found in Xylella fastidiosa (strain Temecula1 / ATCC 700964).